The sequence spans 1020 residues: Inner tegument protein (1020 aa).

Positions 539–1020 (WGVRIPDRDT…EIDAIFNNTK (482 aa)) are interaction with large tegument protein.

The protein belongs to the herpesviridae inner tegument protein family. As to quaternary structure, interacts (via C-terminus) with the large tegument protein/LTP (via N-terminus).

The protein localises to the virion tegument. Its subcellular location is the host cytoplasm. It is found in the host nucleus. It localises to the host Golgi apparatus. The protein resides in the host trans-Golgi network. Plays an essential role in cytoplasmic secondary envelopment during viral egress. Interacts with the capsid via the large tegument protein/LTP and participates in its transport to the host trans-Golgi network (TGN) where secondary envelopment occurs. Modulates tegumentation and capsid accumulation at the viral assembly complex. In Equine herpesvirus 1 (strain Ab4p) (EHV-1), this protein is Inner tegument protein.